Reading from the N-terminus, the 943-residue chain is Protein translocase subunit SecA (943 aa).

ATP is bound by residues Gln-90, 108–112 (GEGKT), and Asp-509. The interval 535 to 560 (PNNEHKPPIPKQRSSKSKGGFSSKVG) is disordered. The span at 551–560 (SKGGFSSKVG) shows a compositional bias: low complexity.

This sequence belongs to the SecA family. In terms of assembly, monomer and homodimer. Part of the essential Sec protein translocation apparatus which comprises SecA, SecYEG and auxiliary proteins SecDF. Other proteins may also be involved.

The protein resides in the cell inner membrane. The protein localises to the cellular thylakoid membrane. It localises to the cytoplasm. The catalysed reaction is ATP + H2O + cellular proteinSide 1 = ADP + phosphate + cellular proteinSide 2.. Its function is as follows. Part of the Sec protein translocase complex. Interacts with the SecYEG preprotein conducting channel. Has a central role in coupling the hydrolysis of ATP to the transfer of proteins into and across the cell membrane, serving as an ATP-driven molecular motor driving the stepwise translocation of polypeptide chains across the membrane. Probably participates in protein translocation into and across both the cytoplasmic and thylakoid membranes in cyanobacterial cells. This chain is Protein translocase subunit SecA, found in Prochlorococcus marinus (strain MIT 9312).